The primary structure comprises 180 residues: Small ribosomal subunit protein uS4 (180 aa).

In terms of domain architecture, S4 RNA-binding spans 103–174 (RRLQTIVYKK…HPERMMIEKA (72 aa)).

This sequence belongs to the universal ribosomal protein uS4 family. In terms of assembly, part of the 30S ribosomal subunit. Contacts protein S5. The interaction surface between S4 and S5 is involved in control of translational fidelity.

Functionally, one of the primary rRNA binding proteins, it binds directly to 16S rRNA where it nucleates assembly of the body of the 30S subunit. Its function is as follows. With S5 and S12 plays an important role in translational accuracy. The polypeptide is Small ribosomal subunit protein uS4 (Pyrococcus abyssi (strain GE5 / Orsay)).